The chain runs to 82 residues: Progonadoliberin-3 (82 aa).

The signal sequence occupies residues 1–23 (MDLSNRTVVQVVVLALVAQVTLS). Gln-24 carries the post-translational modification Pyrrolidone carboxylic acid. The residue at position 33 (Gly-33) is a Glycine amide.

This sequence belongs to the GnRH family.

The protein localises to the secreted. Its function is as follows. Stimulates the secretion of gonadotropins. The chain is Progonadoliberin-3 (gnrh3) from Salmo trutta (Brown trout).